The following is a 512-amino-acid chain: Alpha-amylase (512 aa).

The signal sequence occupies residues Met-1–Ala-15. 3 cysteine pairs are disulfide-bonded: Cys-43–Cys-101, Cys-85–Cys-130, and Cys-156–Cys-175. Residues Asn-115, Arg-173, and Asp-182 each coordinate Ca(2+). Chloride is bound at residue Arg-210. Asp-212 functions as the Nucleophile in the catalytic mechanism. His-216 serves as a coordination point for Ca(2+). Residue Glu-248 is the Proton donor of the active site. Arg-352 lines the chloride pocket. 2 disulfides stabilise this stretch: Cys-394/Cys-400 and Cys-466/Cys-478. N-linked (GlcNAc...) asparagine glycosylation occurs at Asn-496.

Belongs to the glycosyl hydrolase 13 family. Requires Ca(2+) as cofactor. It depends on chloride as a cofactor.

It is found in the secreted. It carries out the reaction Endohydrolysis of (1-&gt;4)-alpha-D-glucosidic linkages in polysaccharides containing three or more (1-&gt;4)-alpha-linked D-glucose units.. Catalyzes the hydrolysis of alpha-1,4 glycosidic linkages in starch, glycogen and similar oligosaccharides. This chain is Alpha-amylase, found in Oryzias latipes (Japanese rice fish).